Here is a 487-residue protein sequence, read N- to C-terminus: MVSLICTLQSHRDDVNCVAFSGDLLATCSADKSICVYSSRDFSELPFSPLSGHGYGVHCCCFSACGQYLASCSTDATTMVWSMDTGEIEAVLEHPGRSPVRVCAFSPDSSHLVSGGSDGSIALWDFTSRTLRRTGVVNDTSIVACSFTPCGQMFITGSTYGDLRLWDLNMNHLHAEKNAHDLGVSCAQFAPKMMKGTDGCVQFRLASCGQDSLLKIWIVSLLPSAGIKMQLAHTLTGQSAPVLSCAYSPDGQMLVSGSVDKTVTVYQADEGVLLYTLHQHDRYVTACAFSPTAPLIATGSMDKSVNIWRMEEGSSAQGKSLPDEKAAFSNTEGRKACGHSRLMVSEWSEEEVLAWLREEGLEAVTDAFKSNNIDGEELLSLSKETLSSDLHIESLGLRSKVMKKIEELKMVPVYNGTPDEFLCPITREIMKDPVIAADGYSYEREAIEAWISTKNRTSPMTNLPLQTTLLTPNRTLKMAIFRWSTSQ.

WD repeat units lie at residues 10–47 (SHRD…ELPF), 52–93 (GHGY…AVLE), 95–134 (PGRS…LRRT), 137–176 (VNDT…LHAE), 179–227 (AHDL…SAGI), 237–276 (GQSA…LLYT), and 279–318 (QHDR…SAQG). The region spanning 347–411 (WSEEEVLAWL…MKKIEELKMV (65 aa)) is the SAM domain. One can recognise a U-box domain in the interval 416–487 (GTPDEFLCPI…MAIFRWSTSQ (72 aa)).

This is WD repeat, SAM and U-box domain-containing protein 1 (wdsub1) from Danio rerio (Zebrafish).